The following is a 663-amino-acid chain: Probable rhamnogalacturonate lyase B (663 aa).

Residues 1-19 (MRLRTSLGVASACASVASA) form the signal peptide. 10 N-linked (GlcNAc...) asparagine glycosylation sites follow: Asn-27, Asn-110, Asn-143, Asn-239, Asn-285, Asn-495, Asn-535, Asn-569, Asn-597, and Asn-638.

The protein belongs to the polysaccharide lyase 4 family.

The protein localises to the secreted. The enzyme catalyses Endotype eliminative cleavage of L-alpha-rhamnopyranosyl-(1-&gt;4)-alpha-D-galactopyranosyluronic acid bonds of rhamnogalacturonan I domains in ramified hairy regions of pectin leaving L-rhamnopyranose at the reducing end and 4-deoxy-4,5-unsaturated D-galactopyranosyluronic acid at the non-reducing end.. Pectinolytic enzymes consist of four classes of enzymes: pectin lyase, polygalacturonase, pectin methylesterase and rhamnogalacturonase. Degrades the rhamnogalacturonan I (RG-I) backbone of pectin. The chain is Probable rhamnogalacturonate lyase B (rglB) from Aspergillus flavus (strain ATCC 200026 / FGSC A1120 / IAM 13836 / NRRL 3357 / JCM 12722 / SRRC 167).